The sequence spans 281 residues: Pseudouridine-5'-phosphate glycosidase (281 aa).

The active-site Proton donor is the Glu9. Lys69 and Val89 together coordinate substrate. Mn(2+) is bound at residue Asp118. Residue 120–122 (SAD) participates in substrate binding. Lys139 serves as the catalytic Nucleophile.

It belongs to the pseudouridine-5'-phosphate glycosidase family. As to quaternary structure, homotrimer. The cofactor is Mn(2+).

The enzyme catalyses D-ribose 5-phosphate + uracil = psi-UMP + H2O. Catalyzes the reversible cleavage of pseudouridine 5'-phosphate (PsiMP) to ribose 5-phosphate and uracil. Functions biologically in the cleavage direction, as part of a pseudouridine degradation pathway. This chain is Pseudouridine-5'-phosphate glycosidase, found in Thermus thermophilus (strain ATCC BAA-163 / DSM 7039 / HB27).